A 155-amino-acid chain; its full sequence is FUN14 domain-containing protein 1 (155 aa).

At 1–47 (MATRNPPPQEYESDDDSYEVLDLTEYARRHHWWNRVFGHSSGPMVEK) the chain is on the cytoplasmic side. Phosphoserine is present on residues serine 13 and serine 17. The residue at position 18 (tyrosine 18) is a Phosphotyrosine; by SRC. The YXXL motif lies at 18–21 (YEVL). Residues 48 to 68 (YSVATQIVMGGVSGWCAGFLF) traverse the membrane as a helical segment. Topologically, residues 69 to 74 (QKVGKL) are mitochondrial intermembrane. A helical membrane pass occupies residues 75–95 (AATAVGGGFLLLQIASHSGYV). At 96–133 (QIDWKRVEKDVNKAKRQIKKRANKAAPEINNIIEEATE) the chain is on the cytoplasmic side. Lysine 119 participates in a covalent cross-link: Glycyl lysine isopeptide (Lys-Gly) (interchain with G-Cter in ubiquitin). A helical membrane pass occupies residues 134 to 154 (FVKQNIVISSGFVGGFLLGLA). Position 155 (serine 155) is a topological domain, mitochondrial intermembrane.

This sequence belongs to the FUN14 family. Interacts (via YXXL motif) with MAP1 LC3 family proteins MAP1LC3A, MAP1LC3B and GABARAP. Interacts with DNM1L/DPR1. Interacts with GPX4. In terms of processing, phosphorylation at Ser-13 by CK2 and at Tyr-18 by SRC inhibits activation of mitophagy. Following hypoxia, dephosphorylated at Tyr-18, leading to interaction with MAP1 LC3 family proteins and triggering mitophagy. Dephosphorylation is mediated by PGAM5. Phosphorylated by ULK1 at Ser-17 which enhances FUNDC1 binding to LC3. Ubiquitinated on Lys-119. Deubiquitinated by USP19; leading to hypoxia-induced DRP1 oligomerization and GTPase activity.

It localises to the mitochondrion outer membrane. Functionally, integral mitochondrial outer-membrane protein that mediates the formation of mitochondria-associated endoplasmic reticulum membranes (MAMs). In turn, mediates angiogenesis and neoangiogenesis through interference with intracellular Ca(2+) communication and regulation of the vascular endothelial growth factor receptor KDR/VEGFR2 expression at both mRNA and protein levels. Also acts as an activator of hypoxia-induced mitophagy, an important mechanism for mitochondrial quality and homeostasis, by interacting with and recruiting LC3 protein family to mitochondria. Mechanistically, recruits DRP1 at ER-mitochondria contact sites leading to DRP1 oligomerization and GTPase activity to facilitate mitochondrial fission during hypoxia. Additionally, plays a role in hepatic ferroptosis by interacting directly with glutathione peroxidase/GPX4 to facilitate its recruitment into mitochondria through TOM/TIM complex where it is degraded by mitophagy. The chain is FUN14 domain-containing protein 1 (FUNDC1) from Bos taurus (Bovine).